A 92-amino-acid chain; its full sequence is PqqA binding protein (92 aa).

Belongs to the PqqD family. Monomer. Interacts with PqqE.

The protein operates within cofactor biosynthesis; pyrroloquinoline quinone biosynthesis. In terms of biological role, functions as a PqqA binding protein and presents PqqA to PqqE, in the pyrroloquinoline quinone (PQQ) biosynthetic pathway. This chain is PqqA binding protein, found in Klebsiella pneumoniae (strain 342).